Here is a 325-residue protein sequence, read N- to C-terminus: Terpene synthase 11 (325 aa).

A DDxx(x)D/E motif motif is present at residues 97–102 (DDEYLE). An NDxxSxxxD/E motif motif is present at residues 227–235 (NDIYSFVKE).

This sequence belongs to the terpene synthase family.

The catalysed reaction is (2E,6E)-farnesyl diphosphate = (E)-beta-farnesene + diphosphate. It carries out the reaction (2E,6E)-farnesyl diphosphate = (3E,6E)-alpha-farnesene + diphosphate. It catalyses the reaction geranylgeranyl diphosphate + H2O = (S)-(+)-nephthenol + diphosphate. Functionally, terpene synthase that converts its substrate farnesyl diphosphate (FPP) into the sesquiterpenes (E)-beta-farnesene and (E,E)-alpha-farnesene. TPS11 also converts geranylgeranyl diphosphate (GGPP) into the diterpene (S)-nephthenol. The protein is Terpene synthase 11 of Dictyostelium purpureum (Slime mold).